The sequence spans 93 residues: MPRSLKKGPFVDQHLFVKVDRENEKGTKNVIKTWSRRSMIIPDMLGHTIAVHDGRKHIPVFVTESMVGHKLGEFAPTRTFRGHVKDDRKGKRR.

This sequence belongs to the universal ribosomal protein uS19 family.

Functionally, protein S19 forms a complex with S13 that binds strongly to the 16S ribosomal RNA. This is Small ribosomal subunit protein uS19 from Arthrobacter sp. (strain FB24).